We begin with the raw amino-acid sequence, 124 residues long: UPF0299 membrane protein VIBHAR_02118 (124 aa).

A run of 4 helical transmembrane segments spans residues 6 to 26 (LLQLVHLLISLALIMGALGIG), 35 to 55 (VSVPGSVIGMLVLFFSMTLGL), 72 to 92 (MILLFVPISVGLMQHFDMLLA), and 95 to 115 (LPIIASAVGGSLIVLISLAWF).

It belongs to the UPF0299 family.

It localises to the cell inner membrane. The sequence is that of UPF0299 membrane protein VIBHAR_02118 from Vibrio campbellii (strain ATCC BAA-1116).